A 651-amino-acid chain; its full sequence is Peptidoglycan D,D-transpeptidase MrdA (651 aa).

Residues 30–50 traverse the membrane as a helical segment; that stretch reads LVAFLGILLLTGVLFTNIYQL. The active-site Acyl-ester intermediate is S338.

This sequence belongs to the transpeptidase family. MrdA subfamily.

The protein resides in the cell inner membrane. The catalysed reaction is Preferential cleavage: (Ac)2-L-Lys-D-Ala-|-D-Ala. Also transpeptidation of peptidyl-alanyl moieties that are N-acyl substituents of D-alanine.. The protein operates within cell wall biogenesis; peptidoglycan biosynthesis. Its function is as follows. Catalyzes cross-linking of the peptidoglycan cell wall. The chain is Peptidoglycan D,D-transpeptidase MrdA from Haemophilus influenzae (strain ATCC 51907 / DSM 11121 / KW20 / Rd).